Here is a 186-residue protein sequence, read N- to C-terminus: Nucleoside triphosphate pyrophosphatase (186 aa).

Asp-68 acts as the Proton acceptor in catalysis.

The protein belongs to the Maf family. Requires a divalent metal cation as cofactor.

The protein localises to the cytoplasm. The enzyme catalyses a ribonucleoside 5'-triphosphate + H2O = a ribonucleoside 5'-phosphate + diphosphate + H(+). It catalyses the reaction a 2'-deoxyribonucleoside 5'-triphosphate + H2O = a 2'-deoxyribonucleoside 5'-phosphate + diphosphate + H(+). Its function is as follows. Nucleoside triphosphate pyrophosphatase. May have a dual role in cell division arrest and in preventing the incorporation of modified nucleotides into cellular nucleic acids. The polypeptide is Nucleoside triphosphate pyrophosphatase (Prochlorococcus marinus (strain MIT 9303)).